Here is a 276-residue protein sequence, read N- to C-terminus: Diaminopimelate epimerase (276 aa).

3 residues coordinate substrate: Asn-13, Gln-46, and Asn-66. Cys-75 functions as the Proton donor in the catalytic mechanism. Residues 76–77 (GN), Asn-159, Asn-192, and 210–211 (ER) each bind substrate. Cys-219 acts as the Proton acceptor in catalysis. Residue 220–221 (GT) participates in substrate binding.

It belongs to the diaminopimelate epimerase family. In terms of assembly, homodimer.

Its subcellular location is the cytoplasm. It catalyses the reaction (2S,6S)-2,6-diaminopimelate = meso-2,6-diaminopimelate. Its pathway is amino-acid biosynthesis; L-lysine biosynthesis via DAP pathway; DL-2,6-diaminopimelate from LL-2,6-diaminopimelate: step 1/1. In terms of biological role, catalyzes the stereoinversion of LL-2,6-diaminopimelate (L,L-DAP) to meso-diaminopimelate (meso-DAP), a precursor of L-lysine and an essential component of the bacterial peptidoglycan. In Tolumonas auensis (strain DSM 9187 / NBRC 110442 / TA 4), this protein is Diaminopimelate epimerase.